The primary structure comprises 119 residues: uncharacterized protein (119 aa).

3 helical membrane-spanning segments follow: residues 28 to 48, 55 to 75, and 80 to 100; these read AWTT…HLVF, IEVV…NLAI, and PIGK…GIIV.

The protein to M.tuberculosis Rv1342c.

It is found in the cell membrane. This is an uncharacterized protein from Mycobacterium leprae (strain TN).